We begin with the raw amino-acid sequence, 1648 residues long: Putative 1-phosphatidylinositol-3-phosphate 5-kinase FAB1C (1648 aa).

The span at 97–106 (YDKVHPRDSP) shows a compositional bias: basic and acidic residues. Disordered stretches follow at residues 97 to 116 (YDKV…ATES), 241 to 276 (QEDH…NDDA), 721 to 746 (SEIP…ENQL), and 1083 to 1139 (KTGD…GTSL). A compositionally biased stretch (basic and acidic residues) spans 1084-1130 (TGDDNAPRNPEMHDPPKIDRRMQEGSDERDEQSHTDSEANGDNKDPE). In terms of domain architecture, PIPK spans 1316–1639 (NLNNRESEPS…RFRKAMTTYF (324 aa)).

As to quaternary structure, component of the PI(3,5)P2 regulatory complex at least composed of ATG18, SAC/FIG4, FAB1 and VAC14. It depends on Mg(2+) as a cofactor. The cofactor is Mn(2+).

The enzyme catalyses a 1,2-diacyl-sn-glycero-3-phospho-(1D-myo-inositol-3-phosphate) + ATP = a 1,2-diacyl-sn-glycero-3-phospho-(1D-myo-inositol-3,5-bisphosphate) + ADP + H(+). Its function is as follows. The PI(3,5)P2 regulatory complex regulates both the synthesis and turnover of phosphatidylinositol 3,5-bisphosphate (PtdIns(3,5)P2). Catalyzes the phosphorylation of phosphatidylinositol 3-phosphate on the fifth hydroxyl of the myo-inositol ring, to form phosphatidylinositol 3,5-bisphosphate. The polypeptide is Putative 1-phosphatidylinositol-3-phosphate 5-kinase FAB1C (FAB1C) (Arabidopsis thaliana (Mouse-ear cress)).